The primary structure comprises 308 residues: D-alanine--D-alanine ligase (308 aa).

Residues 105-302 (KAIFRSLGLA…FPDLCERILD (198 aa)) enclose the ATP-grasp domain. 133-188 (DLPFGLPCVVKPAGEGSSVGVHLVNEAAELGPACRDAASHAGDVIVERYVKGTEVD) is a binding site for ATP. Residues aspartate 256, glutamate 269, and asparagine 271 each contribute to the Mg(2+) site.

The protein belongs to the D-alanine--D-alanine ligase family. Mg(2+) is required as a cofactor. It depends on Mn(2+) as a cofactor.

It localises to the cytoplasm. It carries out the reaction 2 D-alanine + ATP = D-alanyl-D-alanine + ADP + phosphate + H(+). Its pathway is cell wall biogenesis; peptidoglycan biosynthesis. Cell wall formation. The protein is D-alanine--D-alanine ligase of Anaeromyxobacter sp. (strain K).